Consider the following 338-residue polypeptide: UDP-3-O-acylglucosamine N-acyltransferase (338 aa).

Histidine 239 functions as the Proton acceptor in the catalytic mechanism.

The protein belongs to the transferase hexapeptide repeat family. LpxD subfamily. As to quaternary structure, homotrimer.

The enzyme catalyses a UDP-3-O-[(3R)-3-hydroxyacyl]-alpha-D-glucosamine + a (3R)-hydroxyacyl-[ACP] = a UDP-2-N,3-O-bis[(3R)-3-hydroxyacyl]-alpha-D-glucosamine + holo-[ACP] + H(+). Its pathway is bacterial outer membrane biogenesis; LPS lipid A biosynthesis. Its function is as follows. Catalyzes the N-acylation of UDP-3-O-acylglucosamine using 3-hydroxyacyl-ACP as the acyl donor. Is involved in the biosynthesis of lipid A, a phosphorylated glycolipid that anchors the lipopolysaccharide to the outer membrane of the cell. This chain is UDP-3-O-acylglucosamine N-acyltransferase, found in Xylella fastidiosa (strain M23).